The following is a 93-amino-acid chain: Protein VNG_0358C (93 aa).

The sequence is that of Protein VNG_0358C from Halobacterium salinarum (strain ATCC 700922 / JCM 11081 / NRC-1) (Halobacterium halobium).